The primary structure comprises 672 residues: DNA ligase (672 aa).

Residues 32-36 (DSEYD), 81-82 (SL), and Glu-114 each bind NAD(+). Lys-116 (N6-AMP-lysine intermediate) is an active-site residue. Arg-137, Glu-174, Lys-291, and Lys-315 together coordinate NAD(+). Zn(2+) contacts are provided by Cys-409, Cys-412, Cys-427, and Cys-433. Positions 592–672 (VNENPFKEKT…EFLEIVNSFS (81 aa)) constitute a BRCT domain.

This sequence belongs to the NAD-dependent DNA ligase family. LigA subfamily. Mg(2+) is required as a cofactor. Requires Mn(2+) as cofactor.

It carries out the reaction NAD(+) + (deoxyribonucleotide)n-3'-hydroxyl + 5'-phospho-(deoxyribonucleotide)m = (deoxyribonucleotide)n+m + AMP + beta-nicotinamide D-nucleotide.. In terms of biological role, DNA ligase that catalyzes the formation of phosphodiester linkages between 5'-phosphoryl and 3'-hydroxyl groups in double-stranded DNA using NAD as a coenzyme and as the energy source for the reaction. It is essential for DNA replication and repair of damaged DNA. This is DNA ligase from Actinobacillus succinogenes (strain ATCC 55618 / DSM 22257 / CCUG 43843 / 130Z).